The primary structure comprises 209 residues: ATP-dependent Clp protease proteolytic subunit (209 aa).

Serine 106 (nucleophile) is an active-site residue. Residue histidine 131 is part of the active site.

This sequence belongs to the peptidase S14 family. As to quaternary structure, fourteen ClpP subunits assemble into 2 heptameric rings which stack back to back to give a disk-like structure with a central cavity, resembling the structure of eukaryotic proteasomes.

The protein localises to the cytoplasm. The enzyme catalyses Hydrolysis of proteins to small peptides in the presence of ATP and magnesium. alpha-casein is the usual test substrate. In the absence of ATP, only oligopeptides shorter than five residues are hydrolyzed (such as succinyl-Leu-Tyr-|-NHMec, and Leu-Tyr-Leu-|-Tyr-Trp, in which cleavage of the -Tyr-|-Leu- and -Tyr-|-Trp bonds also occurs).. Cleaves peptides in various proteins in a process that requires ATP hydrolysis. Has a chymotrypsin-like activity. Plays a major role in the degradation of misfolded proteins. The protein is ATP-dependent Clp protease proteolytic subunit of Caulobacter vibrioides (strain ATCC 19089 / CIP 103742 / CB 15) (Caulobacter crescentus).